The primary structure comprises 435 residues: Zinc finger CCCH domain-containing protein 17 (435 aa).

2 disordered regions span residues 1–30 (MDIE…SSTS) and 58–107 (TAKR…GPRH). Residues 28-54 (STSGKVCIHWRAGRCNRFPCPYLHSEL) form a C3H1-type 1 zinc finger. Residues 77 to 103 (SGGGGGRGAGGAGGPNKWGRGPGGADG) show a composition bias toward gly residues. A C3H1-type 2 zinc finger spans residues 108–135 (KVPDRPCRYFLAGDCSYGEKCRYPHSYS). WD repeat units follow at residues 148–189 (GHEK…GVIN), 191–225 (GREI…EMNL), 227–264 (GPTG…NGFE), 271–308 (GHQL…CIQT), 311–348 (DHTG…SLEV), 355–395 (EHGA…DRGR), and 397–435 (FSKQ…SQTK).

The polypeptide is Zinc finger CCCH domain-containing protein 17 (Oryza sativa subsp. japonica (Rice)).